The following is a 379-amino-acid chain: Dihydroorotate dehydrogenase (quinone) (379 aa).

FMN-binding positions include 79-83 and alanine 103; that span reads AGCDK. Lysine 83 serves as a coordination point for substrate. 128–131 lines the substrate pocket; the sequence is NRLG. FMN is bound by residues asparagine 160 and asparagine 193. Asparagine 193 is a binding site for substrate. Catalysis depends on serine 196, which acts as the Nucleophile. Asparagine 198 is a binding site for substrate. 2 residues coordinate FMN: lysine 231 and threonine 259. A substrate-binding site is contributed by 260–261; the sequence is NT. Residues glycine 289, glycine 318, and 339 to 340 each bind FMN; that span reads YT.

Belongs to the dihydroorotate dehydrogenase family. Type 2 subfamily. As to quaternary structure, monomer. It depends on FMN as a cofactor.

Its subcellular location is the cell membrane. It carries out the reaction (S)-dihydroorotate + a quinone = orotate + a quinol. The protein operates within pyrimidine metabolism; UMP biosynthesis via de novo pathway; orotate from (S)-dihydroorotate (quinone route): step 1/1. Its function is as follows. Catalyzes the conversion of dihydroorotate to orotate with quinone as electron acceptor. The protein is Dihydroorotate dehydrogenase (quinone) of Crocosphaera subtropica (strain ATCC 51142 / BH68) (Cyanothece sp. (strain ATCC 51142)).